The chain runs to 264 residues: Phosphatidylserine decarboxylase proenzyme (264 aa).

Residues aspartate 86, histidine 142, and serine 226 each act as charge relay system; for autoendoproteolytic cleavage activity in the active site. Serine 226 serves as the catalytic Schiff-base intermediate with substrate; via pyruvic acid; for decarboxylase activity. Position 226 is a pyruvic acid (Ser); by autocatalysis (serine 226).

It belongs to the phosphatidylserine decarboxylase family. PSD-B subfamily. Prokaryotic type I sub-subfamily. Heterodimer of a large membrane-associated beta subunit and a small pyruvoyl-containing alpha subunit. The cofactor is pyruvate. Post-translationally, is synthesized initially as an inactive proenzyme. Formation of the active enzyme involves a self-maturation process in which the active site pyruvoyl group is generated from an internal serine residue via an autocatalytic post-translational modification. Two non-identical subunits are generated from the proenzyme in this reaction, and the pyruvate is formed at the N-terminus of the alpha chain, which is derived from the carboxyl end of the proenzyme. The autoendoproteolytic cleavage occurs by a canonical serine protease mechanism, in which the side chain hydroxyl group of the serine supplies its oxygen atom to form the C-terminus of the beta chain, while the remainder of the serine residue undergoes an oxidative deamination to produce ammonia and the pyruvoyl prosthetic group on the alpha chain. During this reaction, the Ser that is part of the protease active site of the proenzyme becomes the pyruvoyl prosthetic group, which constitutes an essential element of the active site of the mature decarboxylase.

The protein localises to the cell membrane. It catalyses the reaction a 1,2-diacyl-sn-glycero-3-phospho-L-serine + H(+) = a 1,2-diacyl-sn-glycero-3-phosphoethanolamine + CO2. It participates in phospholipid metabolism; phosphatidylethanolamine biosynthesis; phosphatidylethanolamine from CDP-diacylglycerol: step 2/2. Its function is as follows. Catalyzes the formation of phosphatidylethanolamine (PtdEtn) from phosphatidylserine (PtdSer). This Geobacillus kaustophilus (strain HTA426) protein is Phosphatidylserine decarboxylase proenzyme.